Here is a 152-residue protein sequence, read N- to C-terminus: uncharacterized protein (152 aa).

The signal sequence occupies residues 1–24 (MRKMLAYTLYIVTYLTYIMNEVEC).

This is an uncharacterized protein from Acheta domesticus (House cricket).